The primary structure comprises 131 residues: Large ribosomal subunit protein bL19 (131 aa).

It belongs to the bacterial ribosomal protein bL19 family.

Functionally, this protein is located at the 30S-50S ribosomal subunit interface and may play a role in the structure and function of the aminoacyl-tRNA binding site. This Rhodopseudomonas palustris (strain BisB18) protein is Large ribosomal subunit protein bL19.